A 407-amino-acid chain; its full sequence is Probable tRNA sulfurtransferase (407 aa).

The THUMP domain maps to 61–165 (NEIIQRLSKV…MDAIYIYEKV (105 aa)). Residues 183-184 (ML), 208-209 (HF), Arg265, Gly287, and Gln296 each bind ATP.

This sequence belongs to the ThiI family.

It localises to the cytoplasm. It catalyses the reaction [ThiI sulfur-carrier protein]-S-sulfanyl-L-cysteine + a uridine in tRNA + 2 reduced [2Fe-2S]-[ferredoxin] + ATP + H(+) = [ThiI sulfur-carrier protein]-L-cysteine + a 4-thiouridine in tRNA + 2 oxidized [2Fe-2S]-[ferredoxin] + AMP + diphosphate. The catalysed reaction is [ThiS sulfur-carrier protein]-C-terminal Gly-Gly-AMP + S-sulfanyl-L-cysteinyl-[cysteine desulfurase] + AH2 = [ThiS sulfur-carrier protein]-C-terminal-Gly-aminoethanethioate + L-cysteinyl-[cysteine desulfurase] + A + AMP + 2 H(+). It functions in the pathway cofactor biosynthesis; thiamine diphosphate biosynthesis. Its function is as follows. Catalyzes the ATP-dependent transfer of a sulfur to tRNA to produce 4-thiouridine in position 8 of tRNAs, which functions as a near-UV photosensor. Also catalyzes the transfer of sulfur to the sulfur carrier protein ThiS, forming ThiS-thiocarboxylate. This is a step in the synthesis of thiazole, in the thiamine biosynthesis pathway. The sulfur is donated as persulfide by IscS. The protein is Probable tRNA sulfurtransferase of Staphylococcus epidermidis (strain ATCC 35984 / DSM 28319 / BCRC 17069 / CCUG 31568 / BM 3577 / RP62A).